The primary structure comprises 190 residues: Segregation and condensation protein B (190 aa).

The protein belongs to the ScpB family. As to quaternary structure, homodimer. Homodimerization may be required to stabilize the binding of ScpA to the Smc head domains. Component of a cohesin-like complex composed of ScpA, ScpB and the Smc homodimer, in which ScpA and ScpB bind to the head domain of Smc. The presence of the three proteins is required for the association of the complex with DNA.

The protein localises to the cytoplasm. In terms of biological role, participates in chromosomal partition during cell division. May act via the formation of a condensin-like complex containing Smc and ScpA that pull DNA away from mid-cell into both cell halves. This is Segregation and condensation protein B from Bacillus cereus (strain AH187).